The sequence spans 486 residues: ATP synthase subunit beta (486 aa).

ATP is bound at residue 164-171 (GGAGVGKT).

It belongs to the ATPase alpha/beta chains family. As to quaternary structure, F-type ATPases have 2 components, CF(1) - the catalytic core - and CF(0) - the membrane proton channel. CF(1) has five subunits: alpha(3), beta(3), gamma(1), delta(1), epsilon(1). CF(0) has four main subunits: a(1), b(1), b'(1) and c(9-12).

The protein resides in the cellular thylakoid membrane. It carries out the reaction ATP + H2O + 4 H(+)(in) = ADP + phosphate + 5 H(+)(out). Produces ATP from ADP in the presence of a proton gradient across the membrane. The catalytic sites are hosted primarily by the beta subunits. The sequence is that of ATP synthase subunit beta from Prochlorococcus marinus (strain MIT 9215).